A 278-amino-acid chain; its full sequence is MRADPASAAADIFEANRARGAVRFDLRLQDGVTRRHHLHESGSLRVRFPSPEDDGLSAMFVNTAGGIAGGDRFAIEVAAGEGSRVTLSSAAAEKVYRAPGTPAELAIALRAADSAHISWLPQETILFDRARIHRRMDIDLAETASLLLCEIVVFGRTAMGERMREGEFVDRWRLRRGGKLVFAETVRLDGDIGDKLAQPAIANGATAIGTALIVPGDGALVERIRESLPASRGEAGLSAWNGFAMARFCAQDAASLRADMMAVLGCASAVPLPRLWLN.

It belongs to the UreD family. UreD, UreF and UreG form a complex that acts as a GTP-hydrolysis-dependent molecular chaperone, activating the urease apoprotein by helping to assemble the nickel containing metallocenter of UreC. The UreE protein probably delivers the nickel.

The protein localises to the cytoplasm. In terms of biological role, required for maturation of urease via the functional incorporation of the urease nickel metallocenter. The chain is Urease accessory protein UreD 1 from Bradyrhizobium sp. (strain ORS 278).